Consider the following 865-residue polypeptide: FO synthase (865 aa).

A disordered region spans residues 1–21; that stretch reads MIEGVTELATPNVPPAPPSPS. Radical SAM core domains lie at 76-320 and 544-785; these read ITYS…LGPD and VTYV…DNIQ. Residues 77–409 form a cofG-like region; sequence TYSRNVFIPL…PRIGAHVAAL (333 aa). [4Fe-4S] cluster-binding residues include C90, C94, C97, C558, C562, and C565. Positions 521–854 are cofH-like; the sequence is DGAELDAVAA…RERTTVYGRV (334 aa).

It in the N-terminal section; belongs to the radical SAM superfamily. CofG family. The protein in the C-terminal section; belongs to the radical SAM superfamily. CofH family. [4Fe-4S] cluster is required as a cofactor.

The enzyme catalyses 5-amino-6-(D-ribitylamino)uracil + L-tyrosine + S-adenosyl-L-methionine = 5-amino-5-(4-hydroxybenzyl)-6-(D-ribitylimino)-5,6-dihydrouracil + 2-iminoacetate + 5'-deoxyadenosine + L-methionine + H(+). It catalyses the reaction 5-amino-5-(4-hydroxybenzyl)-6-(D-ribitylimino)-5,6-dihydrouracil + S-adenosyl-L-methionine = 7,8-didemethyl-8-hydroxy-5-deazariboflavin + 5'-deoxyadenosine + L-methionine + NH4(+) + H(+). It participates in cofactor biosynthesis; coenzyme F0 biosynthesis. Functionally, catalyzes the radical-mediated synthesis of 7,8-didemethyl-8-hydroxy-5-deazariboflavin (FO) from 5-amino-6-(D-ribitylamino)uracil and L-tyrosine. In Nocardia farcinica (strain IFM 10152), this protein is FO synthase (fbiC).